A 1110-amino-acid polypeptide reads, in one-letter code: MALKETDAKIHVERGDHPEIYDEAYYDRSVDHKNEILDTLAEMLQNATGKTLRPTRDTQTVLANNEVPQSSSGLSSTPTTISIMDLPNPCLNASSLTCSIKGVSTFNVYYQVESNGVIYSCISDTITKLGNCEGSSELPRSFETVPVVPITKIDNKRKLSIGTKFYIIESLENYNYPIMYNSRPTNGTVSLQSVKFSGDCKISKTNIVNSYTVSLTTPEKIMGYVVKREGSDMSHSIISFSGSVSLTFTEENMDGKHNLLCGDKSSKVPLVDKRVRDCIIKYSKNIYKQTACINFSWFRLIMIALIVYFPIRYLVNKTSKTLFYGYDLLGLITYPILLLINYLWSYFPLKCKVCGNLCLVTHECSKLCICNKNKASEEHSEECPIITRTAEKNKKYNWASIEWFHLIVNTKIGLSFLKAVTETLIGFLILSQMPMSMAQTAQCLDSCYYVPGCDRFVTNRYDKCPEKDQCFCAIKENSIVESNFLTNVVTEGPMDCIPYQECKGRITENALVTFVKCRFGCEYASIFQSKPLDNGFLEYSGDTLGLNAVNLHFMKRLRNGIIDFYNKTEKYGYISGDALKSNESDIPESIFPRKSLIFDSVIDGKYRYMIEESLLSGGGTVFSLNDKSSSTAQKFVVYIKKVRIQYDVSEQYTTAPIQSTHTDFFSTCTGKCSDCRKEQPITGYQDFCITPTSYWGCEEVWCLAINEGATCGFCRNVYDMDQSFRIYSVIKSTIKSEVCISGFVGAKCFTVSEEVPSESGYFQADILADFHNDGLTIGQLIAHGPDSHVYAGNIARLNNPSKMFGHPQLSHQGDPIFSKKTLDTNDLSWDCSAIGKKTITIKSCGYDTYRFKTGLNQISDIPVQFTDQNSFYMEKIFSLGKLKIVLDLPSELFKTVPKKPILSSVSLSCKGCFLCSQGLRCAASFISDITFSARLTMKQCSLSTYQIAVKKGANKYNLTMFCTSNPEKQKMIIEPEGDKSYSVEALVDSVAVLEPENIIDQNDQHAHEEQQYNSDTSVWSFWDYVKSPFNFIASHFGSFFDTVRVVLLILFVFALAYLCSIVATMCRGYVRNKSYKTKYIEDTNDYSLVSTSSGKDTITRRRPPLDFSGI.

Positions 1-8 (MALKETDA) are excised as a propeptide. Residues 1–290 (MALKETDAKI…KYSKNIYKQT (290 aa)) lie on the Lumenal side of the membrane. Residues 14 to 16 (RGD) carry the Cell attachment site motif. N-linked (GlcNAc...) asparagine; by host glycans are attached at residues Asn-46 and Asn-92. Intrachain disulfides connect Cys-90–Cys-121 and Cys-98–Cys-132. Residues 153-171 (IDNKRKLSIGTKFYIIESL) form a non-covalent dimerization region. Residue Asn-186 is glycosylated (N-linked (GlcNAc...) asparagine; by host). Cys-200 and Cys-261 are oxidised to a cystine. The chain crosses the membrane as a helical span at residues 291 to 342 (ACINFSWFRLIMIALIVYFPIRYLVNKTSKTLFYGYDLLGLITYPILLLINY). Residues 343 to 459 (LWSYFPLKCK…VPGCDRFVTN (117 aa)) are Cytoplasmic-facing. Residues 460–1044 (RYDKCPEKDQ…HFGSFFDTVR (585 aa)) lie on the Lumenal side of the membrane. N-linked (GlcNAc...) asparagine; by host glycans are attached at residues Asn-566, Asn-582, and Asn-957. The chain crosses the membrane as a helical span at residues 1045-1065 (VVLLILFVFALAYLCSIVATM). The Cytoplasmic portion of the chain corresponds to 1066 to 1110 (CRGYVRNKSYKTKYIEDTNDYSLVSTSSGKDTITRRRPPLDFSGI). Residues 1091–1110 (TSSGKDTITRRRPPLDFSGI) form a disordered region.

Belongs to the tospovirus envelope glycoprotein family. As to quaternary structure, homodimer; disulfide-linked. Heterodimer with Glycoprotein C. Interacts with nucleoprotein. In terms of assembly, heterodimer with Glycoprotein N. Interacts with nucleoprotein. In terms of processing, specific enzymatic cleavages in vivo yield mature proteins including Glycoprotein N and Glycoprotein C. Glycosylated with O-linked glycans. Glycosylation is essential for proper subcellular location. Post-translationally, cleaved at acidic pH.

It localises to the virion membrane. It is found in the host Golgi apparatus membrane. The protein localises to the host endoplasmic reticulum membrane. Forms the spikes present at the surface of the virion together with Glycoprotein C. They are able to attach the virion to a cell receptor and to promote fusion of membranes after endocytosis of the virion. Plays a role in virus binding and/or entry into the vector midgut. Its function is as follows. Forms the spikes present at the surface of the virion together with Glycoprotein N. They are able to attach the virion to a cell receptor and to promote fusion of membranes after endocytosis of the virion. Probable class II fusion protein. The chain is Envelopment polyprotein (GP) from Impatiens necrotic spot virus (INSV).